Here is a 447-residue protein sequence, read N- to C-terminus: Putative branched-chain amino acid carrier protein SAUSA300_1300 (447 aa).

A run of 12 helical transmembrane segments spans residues 6-26 (WVIG…IFPP), 40-60 (ILAF…VGAL), 74-94 (PKFS…LFAI), 114-134 (SSIA…YICL), 143-163 (IGSL…IKGY), 193-213 (GYLT…VNAV), 229-249 (LTAG…LGYI), 290-310 (LLGI…IVAV), 326-346 (FVLV…NAVI), 350-370 (IPVL…ILIA), 382-402 (IPVI…LGWL), and 417-437 (LEWF…GIFV).

This sequence belongs to the branched chain amino acid transporter family.

Its subcellular location is the cell membrane. Functionally, component of the transport system for branched-chain amino acids (leucine, isoleucine and valine), which is coupled to a proton motive force (Potential). Contributes to NaCl tolerance. This chain is Putative branched-chain amino acid carrier protein SAUSA300_1300, found in Staphylococcus aureus (strain USA300).